The following is a 218-amino-acid chain: Adenylate kinase (218 aa).

10 to 15 (GAGKGT) contacts ATP. Positions 30–59 (STGDMLRAAVKAGTPLGLEAKKVMDAGGLV) are NMP. AMP-binding positions include Thr31, Arg36, 57–59 (GLV), 85–88 (GFPR), and Gln92. The tract at residues 122–159 (GRRVHPASGRVYHTKYNPPKVEGKDDETGDELVQRDDD) is LID. ATP is bound by residues Arg123 and 132–133 (VY). A disordered region spans residues 139 to 160 (PPKVEGKDDETGDELVQRDDDQ). AMP is bound by residues Arg156 and Arg167. Gly203 serves as a coordination point for ATP.

Belongs to the adenylate kinase family. Monomer.

The protein localises to the cytoplasm. The catalysed reaction is AMP + ATP = 2 ADP. It participates in purine metabolism; AMP biosynthesis via salvage pathway; AMP from ADP: step 1/1. Functionally, catalyzes the reversible transfer of the terminal phosphate group between ATP and AMP. Plays an important role in cellular energy homeostasis and in adenine nucleotide metabolism. The protein is Adenylate kinase of Alcanivorax borkumensis (strain ATCC 700651 / DSM 11573 / NCIMB 13689 / SK2).